We begin with the raw amino-acid sequence, 302 residues long: Sulfate adenylyltransferase subunit 2 (302 aa).

Belongs to the PAPS reductase family. CysD subfamily. In terms of assembly, heterodimer composed of CysD, the smaller subunit, and CysN.

The catalysed reaction is sulfate + ATP + H(+) = adenosine 5'-phosphosulfate + diphosphate. It functions in the pathway sulfur metabolism; hydrogen sulfide biosynthesis; sulfite from sulfate: step 1/3. With CysN forms the ATP sulfurylase (ATPS) that catalyzes the adenylation of sulfate producing adenosine 5'-phosphosulfate (APS) and diphosphate, the first enzymatic step in sulfur assimilation pathway. APS synthesis involves the formation of a high-energy phosphoric-sulfuric acid anhydride bond driven by GTP hydrolysis by CysN coupled to ATP hydrolysis by CysD. This Proteus mirabilis (strain HI4320) protein is Sulfate adenylyltransferase subunit 2.